A 401-amino-acid chain; its full sequence is L-threonine ammonia-lyase (401 aa).

Lys-51 is modified (N6-(pyridoxal phosphate)lysine). Pyridoxal 5'-phosphate-binding positions include Asn-78, 178-181, and Ser-301; that span reads GGGL. In terms of domain architecture, ACT spans 326–401; sequence FIETFVMDRP…AKGYEVRIVG (76 aa).

This sequence belongs to the serine/threonine dehydratase family. In terms of assembly, homotetramer. The cofactor is pyridoxal 5'-phosphate.

It carries out the reaction L-threonine = 2-oxobutanoate + NH4(+). It catalyses the reaction L-serine = pyruvate + NH4(+). It functions in the pathway amino-acid biosynthesis; L-isoleucine biosynthesis; 2-oxobutanoate from L-threonine: step 1/1. With respect to regulation, activity is insensitive to allosteric regulators L-valine and L-isoleucine at low concentrations, while these L-amino acids are inhibitors at high concentrations. Is insensitive to ammonium chloride and AMP. Inhibited in the presence of aminoxyacetic acid (AOAA), an inhibitor of pyridoxal phosphate-dependent enzymes. Catalyzes the conversion of L-threonine to 2-oxobutanoate and ammonia. Can also use L-serine, but the catalytic efficiency toward L-threonine is about sixfold higher than that toward L-serine. Also shows weak activity toward L-allo-threonine, but cannot use the corresponding D-amino acids. Does not exhibit racemase activity toward various amino acids, including serine. Physiologically, is likely involved in the threonine-dependent pathway of isoleucine biosynthesis. The chain is L-threonine ammonia-lyase from Thermotoga maritima (strain ATCC 43589 / DSM 3109 / JCM 10099 / NBRC 100826 / MSB8).